A 451-amino-acid chain; its full sequence is Glutamyl-tRNA reductase (451 aa).

Substrate-binding positions include Thr49–Arg52, Ser109, Glu114–Gln116, and Gln120. Cys50 functions as the Nucleophile in the catalytic mechanism. An NADP(+)-binding site is contributed by Gly190–Gly195.

This sequence belongs to the glutamyl-tRNA reductase family. As to quaternary structure, homodimer.

It catalyses the reaction (S)-4-amino-5-oxopentanoate + tRNA(Glu) + NADP(+) = L-glutamyl-tRNA(Glu) + NADPH + H(+). It functions in the pathway porphyrin-containing compound metabolism; protoporphyrin-IX biosynthesis; 5-aminolevulinate from L-glutamyl-tRNA(Glu): step 1/2. Catalyzes the NADPH-dependent reduction of glutamyl-tRNA(Glu) to glutamate 1-semialdehyde (GSA). The chain is Glutamyl-tRNA reductase from Mycolicibacterium smegmatis (strain ATCC 700084 / mc(2)155) (Mycobacterium smegmatis).